Consider the following 507-residue polypeptide: Cytochrome P450 71D2 (507 aa).

2 helical membrane passes run 6 to 26 (LPFN…LIYG) and 447 to 467 (ICPG…LLLY). Cys-448 contributes to the heme binding site.

Belongs to the cytochrome P450 family.

The protein localises to the membrane. This chain is Cytochrome P450 71D2, found in Catharanthus roseus (Madagascar periwinkle).